The chain runs to 244 residues: Ribonuclease PH (244 aa).

Phosphate contacts are provided by residues R87 and 125-127; that span reads GTR.

It belongs to the RNase PH family. As to quaternary structure, homohexameric ring arranged as a trimer of dimers.

The catalysed reaction is tRNA(n+1) + phosphate = tRNA(n) + a ribonucleoside 5'-diphosphate. Phosphorolytic 3'-5' exoribonuclease that plays an important role in tRNA 3'-end maturation. Removes nucleotide residues following the 3'-CCA terminus of tRNAs; can also add nucleotides to the ends of RNA molecules by using nucleoside diphosphates as substrates, but this may not be physiologically important. Probably plays a role in initiation of 16S rRNA degradation (leading to ribosome degradation) during starvation. In Synechococcus sp. (strain JA-2-3B'a(2-13)) (Cyanobacteria bacterium Yellowstone B-Prime), this protein is Ribonuclease PH.